The following is a 108-amino-acid chain: MSKKLIALCACPMGLAHTFMAAQVLEEAAVEAGYEVKIETQGADGIQNRLTAQDIAEATIIIHSVAVTPEDNERFESRDVYEITLQDAIKNAAGIIKEIEEMIASEQQ.

Positions 1–101 (MSKKLIALCA…AAGIIKEIEE (101 aa)) constitute a PTS EIIB type-2 domain. The active-site Phosphocysteine intermediate is the cysteine 11. Position 11 is a phosphocysteine; by EIIA (cysteine 11).

It is found in the cytoplasm. The catalysed reaction is D-fructose(out) + N(pros)-phospho-L-histidyl-[protein] = D-fructose 1-phosphate(in) + L-histidyl-[protein]. Its function is as follows. The phosphoenolpyruvate-dependent sugar phosphotransferase system (sugar PTS), a major carbohydrate active transport system, catalyzes the phosphorylation of incoming sugar substrates concomitantly with their translocation across the cell membrane. The enzyme II FryABC PTS system is involved in fructose transport. This is PTS system fructose-like EIIB component 1 (fryB) from Shigella flexneri.